Here is a 668-residue protein sequence, read N- to C-terminus: Threonine--tRNA ligase (668 aa).

The region spanning 1–64 (MSQSVSLTFP…TDGKIEIITR (64 aa)) is the TGS domain. Positions 245-553 (DHRKLGREMD…LIENFAGHMP (309 aa)) are catalytic. Zn(2+) contacts are provided by Cys347, His398, and His530.

This sequence belongs to the class-II aminoacyl-tRNA synthetase family. Homodimer. Zn(2+) is required as a cofactor.

It is found in the cytoplasm. The catalysed reaction is tRNA(Thr) + L-threonine + ATP = L-threonyl-tRNA(Thr) + AMP + diphosphate + H(+). Its function is as follows. Catalyzes the attachment of threonine to tRNA(Thr) in a two-step reaction: L-threonine is first activated by ATP to form Thr-AMP and then transferred to the acceptor end of tRNA(Thr). Also edits incorrectly charged L-seryl-tRNA(Thr). The polypeptide is Threonine--tRNA ligase (Rhizobium etli (strain ATCC 51251 / DSM 11541 / JCM 21823 / NBRC 15573 / CFN 42)).